The primary structure comprises 400 residues: MPEQPLPTLPMWRVDHIEPSPTMLALRANGPIHNVRFPRGHEGWWVTGYDEAKAVLSDAAFRPAGMPPAAFTPDCVILGSPGWLVSHEGGEHARLRTIVAPAFSDRRVKLLAQQVEAIAAQLFETLAAQPQPADLRRHLSFPLPAMVISALMGVLYEDHAFFAGLSDEVMTHQHESGPRSASRLAWEELRAYIRGKMRDKRQDPGDNLLTDLLAAVDRGEATEEEAIGLAAGMLVAGHESTVAQIEFGLLAMLRHPQQRERLVGNPSLVDKAVEEILRMYPPGAGWDGIMRYPRTDVTIAGVHIPAESKVLVGLPATSFDPRHFEDPEIFDIGRDAKPHLAFSYGPHYCIGMALARLELKVVFGSIFQRFPALRLAVAPEELKLRKEIITGGFEEFPVLW.

Residue C349 coordinates heme.

It belongs to the cytochrome P450 family. Requires heme as cofactor.

In terms of biological role, cytochromes P450 are a group of heme-thiolate monooxygenases. They oxidize a variety of structurally unrelated compounds, including steroids, fatty acids, and xenobiotics. The polypeptide is Cytochrome P450 BJ-1 homolog (cyp112A2) (Sinorhizobium fredii (strain NBRC 101917 / NGR234)).